We begin with the raw amino-acid sequence, 317 residues long: Transaldolase (317 aa).

The Schiff-base intermediate with substrate role is filled by Lys-126.

This sequence belongs to the transaldolase family. Type 1 subfamily. Homodimer.

It localises to the cytoplasm. It carries out the reaction D-sedoheptulose 7-phosphate + D-glyceraldehyde 3-phosphate = D-erythrose 4-phosphate + beta-D-fructose 6-phosphate. It functions in the pathway carbohydrate degradation; pentose phosphate pathway; D-glyceraldehyde 3-phosphate and beta-D-fructose 6-phosphate from D-ribose 5-phosphate and D-xylulose 5-phosphate (non-oxidative stage): step 2/3. Its function is as follows. Transaldolase is important for the balance of metabolites in the pentose-phosphate pathway. This chain is Transaldolase, found in Burkholderia cenocepacia (strain ATCC BAA-245 / DSM 16553 / LMG 16656 / NCTC 13227 / J2315 / CF5610) (Burkholderia cepacia (strain J2315)).